A 114-amino-acid polypeptide reads, in one-letter code: MSKIAKLGSFTLVSGVVATSCYYYFIDRDGYHYKRSVWKQVGDEVQRVIDRKPSLVFSKEKYGDQFDYDYKVSGERVERVPVDHKQLVLRYNSETMKDLWNKEVRALVDWVYSR.

A helical transmembrane segment spans residues 4–26 (IAKLGSFTLVSGVVATSCYYYFI).

Belongs to the MICOS complex subunit Mic12 family. In terms of assembly, component of the mitochondrial contact site and cristae organizing system (MICOS) complex.

It localises to the mitochondrion inner membrane. In terms of biological role, component of the MICOS complex, a large protein complex of the mitochondrial inner membrane that plays crucial roles in the maintenance of crista junctions, inner membrane architecture, and formation of contact sites to the outer membrane. This Candida glabrata (strain ATCC 2001 / BCRC 20586 / JCM 3761 / NBRC 0622 / NRRL Y-65 / CBS 138) (Yeast) protein is MICOS complex subunit MIC12 (AIM5).